The chain runs to 308 residues: Cilia- and flagella-associated protein 73 (308 aa).

2 coiled-coil regions span residues 103–134 and 164–227; these read RIQKEKEIEQLTEVLEELKSEKERILEVLEKN and LSAT…QEAK.

Belongs to the CFAP73 family. Interacts with FAP100; form the modifier of inner arm (MIA) complex.

It is found in the cytoplasm. Its subcellular location is the cytoskeleton. It localises to the flagellum axoneme. Its function is as follows. As part of MIA, a complex associated with the outer doublet microtubules of the axoneme, may play a role in ciliary/flagellar motility by regulating the assembly and the activity of inner dynein arm. This Chlamydomonas reinhardtii (Chlamydomonas smithii) protein is Cilia- and flagella-associated protein 73.